A 179-amino-acid chain; its full sequence is ADP-ribosylation factor-like protein 5A (179 aa).

Residue Gly-2 is the site of N-myristoyl glycine attachment. GTP-binding positions include 23–30 (GLDNAGKT), 66–70 (DIGGQ), 125–128 (NKQD), and Ala-159.

Belongs to the small GTPase superfamily. Arf family.

In terms of biological role, lacks ADP-ribosylation enhancing activity. The polypeptide is ADP-ribosylation factor-like protein 5A (ARL5A) (Homo sapiens (Human)).